Reading from the N-terminus, the 445-residue chain is Anaerobilin synthase (445 aa).

The Radical SAM core domain occupies 52–287; sequence TASPRKRLVY…LQGCDFMDDA (236 aa). Residue Tyr-61 coordinates S-adenosyl-L-methionine. Residues Cys-67 and Cys-71 each coordinate [4Fe-4S] cluster. S-adenosyl-L-methionine is bound at residue Phe-73. [4Fe-4S] cluster is bound at residue Cys-74. Residues Gly-118, 119–120, Glu-151, Gln-178, Arg-190, and Asp-215 each bind S-adenosyl-L-methionine; that span reads GT.

The protein belongs to the anaerobic coproporphyrinogen-III oxidase family. ChuW/HutW subfamily. Requires [4Fe-4S] cluster as cofactor.

It carries out the reaction 2 reduced [flavodoxin] + heme b + 2 S-adenosyl-L-methionine = anaerobilin + 2 oxidized [flavodoxin] + Fe(2+) + 5'-deoxyadenosine + L-methionine + S-adenosyl-L-homocysteine. With respect to regulation, inhibited by exposure to molecular oxygen. In terms of biological role, involved in heme degradation and iron utilization under anaerobic conditions. Catalyzes a radical-mediated mechanism facilitating iron liberation and the production of the tetrapyrrole product anaerobilin. Can use heme, mesoheme and deuteroheme as substrates. This is Anaerobilin synthase from Escherichia coli O157:H7.